Consider the following 335-residue polypeptide: Histidinol-phosphate aminotransferase (335 aa).

An N6-(pyridoxal phosphate)lysine modification is found at Lys202.

It belongs to the class-II pyridoxal-phosphate-dependent aminotransferase family. Histidinol-phosphate aminotransferase subfamily. In terms of assembly, homodimer. Requires pyridoxal 5'-phosphate as cofactor.

The catalysed reaction is L-histidinol phosphate + 2-oxoglutarate = 3-(imidazol-4-yl)-2-oxopropyl phosphate + L-glutamate. The protein operates within amino-acid biosynthesis; L-histidine biosynthesis; L-histidine from 5-phospho-alpha-D-ribose 1-diphosphate: step 7/9. This chain is Histidinol-phosphate aminotransferase, found in Thermotoga sp. (strain RQ2).